A 355-amino-acid chain; its full sequence is dTDP-glucose 4,6-dehydratase (355 aa).

Residues 12-13 (FI), 33-36 (DKLT), 59-60 (DI), 81-85 (LAAES), and threonine 100 contribute to the NAD(+) site. Position 85 (serine 85) interacts with substrate. Substrate is bound at residue threonine 134. Aspartate 135 functions as the Proton donor in the catalytic mechanism. Residues glutamate 136 and tyrosine 160 each act as proton acceptor in the active site. 160 to 164 (YSASK) is a binding site for NAD(+). Asparagine 189 lines the substrate pocket. Asparagine 190 serves as a coordination point for NAD(+). Substrate contacts are provided by residues 199–200 (KL), 215–217 (PVY), arginine 224, asparagine 259, and 293–297 (DRPGH).

This sequence belongs to the NAD(P)-dependent epimerase/dehydratase family. dTDP-glucose dehydratase subfamily. As to quaternary structure, homodimer. It depends on NAD(+) as a cofactor.

It catalyses the reaction dTDP-alpha-D-glucose = dTDP-4-dehydro-6-deoxy-alpha-D-glucose + H2O. The protein operates within carbohydrate biosynthesis; dTDP-L-rhamnose biosynthesis. It participates in bacterial outer membrane biogenesis; LPS O-antigen biosynthesis. In terms of biological role, catalyzes the dehydration of dTDP-D-glucose to form dTDP-6-deoxy-D-xylo-4-hexulose via a three-step process involving oxidation, dehydration and reduction. This chain is dTDP-glucose 4,6-dehydratase (rfbB1), found in Neisseria meningitidis serogroup B (strain ATCC BAA-335 / MC58).